The sequence spans 262 residues: Flap endonuclease Xni (262 aa).

Mg(2+) is bound at residue Asp105. In terms of domain architecture, 5'-3' exonuclease spans 162-257; sequence ERSQFLDLMA…FRVIDSPPEK (96 aa). Leu172, Ala173, Pro181, Ile183, and Ile186 together coordinate K(+). Residues 185–190 are interaction with DNA; it reads GIGPKS.

Belongs to the Xni family. It depends on Mg(2+) as a cofactor. K(+) is required as a cofactor.

Its function is as follows. Has flap endonuclease activity. During DNA replication, flap endonucleases cleave the 5'-overhanging flap structure that is generated by displacement synthesis when DNA polymerase encounters the 5'-end of a downstream Okazaki fragment. In Shewanella baltica (strain OS223), this protein is Flap endonuclease Xni.